The sequence spans 598 residues: Beta-galactosidase (598 aa).

The signal sequence occupies residues 1–21 (MLRTTLAPLVLALALALPAAA). Glu-184 functions as the Proton donor in the catalytic mechanism. Glu-260 serves as the catalytic Nucleophile.

Belongs to the glycosyl hydrolase 35 family.

The catalysed reaction is Hydrolysis of terminal non-reducing beta-D-galactose residues in beta-D-galactosides.. In terms of biological role, preferentially hydrolyzes beta(1-&gt;3) galactosyl linkages over beta(1-&gt;4) linkages. This chain is Beta-galactosidase (bga), found in Xanthomonas manihotis.